A 159-amino-acid polypeptide reads, in one-letter code: SsrA-binding protein (159 aa).

Residues 138–153 (KREDGKDKDWSREKER) are compositionally biased toward basic and acidic residues. Residues 138 to 159 (KREDGKDKDWSREKERLMKHKA) are disordered.

It belongs to the SmpB family.

It is found in the cytoplasm. In terms of biological role, required for rescue of stalled ribosomes mediated by trans-translation. Binds to transfer-messenger RNA (tmRNA), required for stable association of tmRNA with ribosomes. tmRNA and SmpB together mimic tRNA shape, replacing the anticodon stem-loop with SmpB. tmRNA is encoded by the ssrA gene; the 2 termini fold to resemble tRNA(Ala) and it encodes a 'tag peptide', a short internal open reading frame. During trans-translation Ala-aminoacylated tmRNA acts like a tRNA, entering the A-site of stalled ribosomes, displacing the stalled mRNA. The ribosome then switches to translate the ORF on the tmRNA; the nascent peptide is terminated with the 'tag peptide' encoded by the tmRNA and targeted for degradation. The ribosome is freed to recommence translation, which seems to be the essential function of trans-translation. The sequence is that of SsrA-binding protein from Pseudoalteromonas translucida (strain TAC 125).